Consider the following 79-residue polypeptide: Secretory calcium-binding phosphoprotein proline-glutamine rich 1 (79 aa).

An N-terminal signal peptide occupies residues 1–15 (MKFLILAGLLSTATA).

It is found in the secreted. Tooth-associated epithelia protein that may participate in structuring the basal lamina at cell-tooth interface. This is Secretory calcium-binding phosphoprotein proline-glutamine rich 1 from Homo sapiens (Human).